A 352-amino-acid polypeptide reads, in one-letter code: RING finger protein 39 (352 aa).

The segment at 20 to 67 (CPLCGGPFEDPVLLACEHSFCRSCLARCWGSPAAPGSEEATPSCPCCG) adopts an RING-type zinc-finger fold. The segment at 98–118 (PGARTGRRRGGRIPTMGCLDP) is disordered. The B30.2/SPRY domain maps to 142–352 (EDLPEDYPVV…APLRIVPGEA (211 aa)).

As to expression, expressed in the hippocampus. Expression is rapidly up-regulated in granule cells of the dentate gyrus after LTP induction.

Its subcellular location is the cytoplasm. It catalyses the reaction S-ubiquitinyl-[E2 ubiquitin-conjugating enzyme]-L-cysteine + [acceptor protein]-L-lysine = [E2 ubiquitin-conjugating enzyme]-L-cysteine + N(6)-ubiquitinyl-[acceptor protein]-L-lysine.. Its pathway is protein modification; protein ubiquitination. Plays an inhibitory role in anti-RNA viral innate immunity by targeting the adapter DDX3X and promoting its 'Lys-48'-linked polyubiquitination. Alternatively, enhances the cGAS-STING pathway activation by promoting 'Lys-63'-linked ubiquitination of STING1, facilitating the STING1-TBK1 complex formation and STING1 activation. This chain is RING finger protein 39 (Rnf39), found in Rattus norvegicus (Rat).